Reading from the N-terminus, the 318-residue chain is Homoserine kinase (318 aa).

An ATP-binding site is contributed by proline 97 to cysteine 107.

It belongs to the GHMP kinase family. Homoserine kinase subfamily.

Its subcellular location is the cytoplasm. It catalyses the reaction L-homoserine + ATP = O-phospho-L-homoserine + ADP + H(+). The protein operates within amino-acid biosynthesis; L-threonine biosynthesis; L-threonine from L-aspartate: step 4/5. Functionally, catalyzes the ATP-dependent phosphorylation of L-homoserine to L-homoserine phosphate. The protein is Homoserine kinase of Photobacterium profundum (strain SS9).